The chain runs to 321 residues: tRNA U34 carboxymethyltransferase (321 aa).

Carboxy-S-adenosyl-L-methionine is bound by residues Lys90, Trp104, Lys109, Gly129, 151 to 153 (DPT), 180 to 181 (IE), Met195, Tyr199, and Arg314.

The protein belongs to the class I-like SAM-binding methyltransferase superfamily. CmoB family. Homotetramer.

It carries out the reaction carboxy-S-adenosyl-L-methionine + 5-hydroxyuridine(34) in tRNA = 5-carboxymethoxyuridine(34) in tRNA + S-adenosyl-L-homocysteine + H(+). In terms of biological role, catalyzes carboxymethyl transfer from carboxy-S-adenosyl-L-methionine (Cx-SAM) to 5-hydroxyuridine (ho5U) to form 5-carboxymethoxyuridine (cmo5U) at position 34 in tRNAs. This is tRNA U34 carboxymethyltransferase from Histophilus somni (strain 129Pt) (Haemophilus somnus).